The following is a 254-amino-acid chain: Pyruvate aldolase (254 aa).

H48 (proton acceptor) is an active-site residue. E151 and D177 together coordinate a divalent metal cation.

It belongs to the HpcH/HpaI aldolase family. A divalent metal cation is required as a cofactor.

It carries out the reaction D-glyceraldehyde + pyruvate = 2-dehydro-3-deoxy-L-galactonate. Aldolase which can catalyze in vitro the aldolisation reaction between pyruvate (PA) and D-glyceraldehyde (D-GA) to form 2-dehydro-3-deoxy-L-galactonate. This Rhizobium etli (strain ATCC 51251 / DSM 11541 / JCM 21823 / NBRC 15573 / CFN 42) protein is Pyruvate aldolase.